The following is a 246-amino-acid chain: 5'-nucleotidase SurE (246 aa).

A divalent metal cation-binding residues include D8, D9, S39, and N91.

The protein belongs to the SurE nucleotidase family. It depends on a divalent metal cation as a cofactor.

The protein localises to the cytoplasm. The enzyme catalyses a ribonucleoside 5'-phosphate + H2O = a ribonucleoside + phosphate. Its function is as follows. Nucleotidase that shows phosphatase activity on nucleoside 5'-monophosphates. The chain is 5'-nucleotidase SurE from Histophilus somni (strain 129Pt) (Haemophilus somnus).